Here is a 373-residue protein sequence, read N- to C-terminus: Alpha-ketoglutarate dependent kainoid synthase (373 aa).

The Fe2OG dioxygenase domain maps to 204 to 320; the sequence is TINSKKMFFT…RSSLITFYEP (117 aa). Fe cation contacts are provided by His-235, Asp-237, and His-296. Arg-311 contacts 2-oxoglutarate.

This sequence belongs to the iron/ascorbate-dependent oxidoreductase family. The cofactor is Fe(2+).

The enzyme catalyses N-(7'-carboxy-7'-demethylgeranyl)-L-glutamate + 2-oxoglutarate + O2 = isodomoate A + succinate + CO2 + H2O. It carries out the reaction N-geranyl-L-glutamate + 2-oxoglutarate + O2 = dainate A + succinate + CO2 + H2O. It participates in secondary metabolite biosynthesis. Iron/ascorbate-dependent oxidoreductase: part of the gene cluster that mediates the biosynthesis of domoic acid (DA) and derivatives, natural products with neurochemical activity acting as ionotropic glutamate receptor (iGluR) agonists, thus being neurotoxins causing amnesic shellfish poisoning (ASP). Catalyzes the conversion of 7'-N-carboxy-L-geranyl-L-glutamic acid (cNGG) to isodomoic acid-A. Also mediates the conversion of N-geranyl-L-glutamic acid (L-NGG) to dainic acid A. The sequence is that of Alpha-ketoglutarate dependent kainoid synthase from Pseudo-nitzschia multiseries (Marine planktonic diatom).